Consider the following 567-residue polypeptide: Urease subunit alpha (567 aa).

In terms of domain architecture, Urease spans 128 to 567 (GGIDPHIHFI…LPLAQLYHLF (440 aa)). Ni(2+) is bound by residues H133, H135, and K216. An N6-carboxylysine modification is found at K216. Position 218 (H218) interacts with substrate. 2 residues coordinate Ni(2+): H245 and H271. The Proton donor role is filled by H319. D359 contributes to the Ni(2+) binding site.

This sequence belongs to the metallo-dependent hydrolases superfamily. Urease alpha subunit family. Heterotrimer of UreA (gamma), UreB (beta) and UreC (alpha) subunits. Three heterotrimers associate to form the active enzyme. It depends on Ni cation as a cofactor. Carboxylation allows a single lysine to coordinate two nickel ions.

The protein resides in the cytoplasm. The enzyme catalyses urea + 2 H2O + H(+) = hydrogencarbonate + 2 NH4(+). It functions in the pathway nitrogen metabolism; urea degradation; CO(2) and NH(3) from urea (urease route): step 1/1. In Marinobacter nauticus (strain ATCC 700491 / DSM 11845 / VT8) (Marinobacter aquaeolei), this protein is Urease subunit alpha.